A 288-amino-acid polypeptide reads, in one-letter code: Signal recognition particle receptor FtsY (288 aa).

Residues 93-100, 175-179, and 233-236 each bind GTP; these read GINGTGKT, DTAGR, and TKLD.

Belongs to the GTP-binding SRP family. FtsY subfamily. Part of the signal recognition particle protein translocation system, which is composed of SRP and FtsY.

It is found in the cell membrane. Its subcellular location is the cytoplasm. The enzyme catalyses GTP + H2O = GDP + phosphate + H(+). In terms of biological role, involved in targeting and insertion of nascent membrane proteins into the cytoplasmic membrane. Acts as a receptor for the complex formed by the signal recognition particle (SRP) and the ribosome-nascent chain (RNC). The polypeptide is Signal recognition particle receptor FtsY (Thermoplasma acidophilum (strain ATCC 25905 / DSM 1728 / JCM 9062 / NBRC 15155 / AMRC-C165)).